Consider the following 299-residue polypeptide: N-acetylneuraminate lyase (299 aa).

2 residues coordinate aceneuramate: S45 and S46. The active-site Proton donor is the Y134. K161 acts as the Schiff-base intermediate with substrate in catalysis. The aceneuramate site is built by T163, G185, D187, and E188.

This sequence belongs to the DapA family. NanA subfamily. Homotetramer.

It localises to the cytoplasm. The catalysed reaction is aceneuramate = aldehydo-N-acetyl-D-mannosamine + pyruvate. It participates in amino-sugar metabolism; N-acetylneuraminate degradation; D-fructose 6-phosphate from N-acetylneuraminate: step 1/5. Its function is as follows. Catalyzes the reversible aldol cleavage of N-acetylneuraminic acid (sialic acid; Neu5Ac) to form pyruvate and N-acetylmannosamine (ManNAc) via a Schiff base intermediate. The sequence is that of N-acetylneuraminate lyase from Rhizobium meliloti (strain 1021) (Ensifer meliloti).